The chain runs to 757 residues: MDVNPTLLFLKVPAQNAISTTFPYTGDPPYSHGTGTGYTMDTVNRTHQYSEKGKWTTNTETGAPQLNPIDGPLPEDNEPSGYAQTDCVLEAMAFLEESHPGIFENSCLETMEVIQQTRVDKLTQGRQTYDWTLNRNQPAATALANTIEVFRSNGLTANESGRLIDFLKDVIESMDKEEMEITTHFQRKRRVRDNMTKKMVTQRTIGKKKQRLNKRSYLIRALTLNTMTKDAERGKLKRRAIATPGMQIRGFVHFVETLARNICEKLEQSGLPVGGNEKKAKLANVVRKMMTNSQDTELSFTITGDNTKWNENQNPRVFLAMITYITRNQPEWFRNVLSIAPIMFSNKMARLGKGYMFESKSMKLRTQIPAEMLASIDLKYFNESTRKKIEKIRPLLIDGTVSLSPGMMMGMFNMLSTVLGVSILNLGQKKYTKTTYWWDGLQSSDDFALIVNAPNHEGIQAGVNRFYRTCKLVGINMSKKKSYINRTGTFEFTSFFYRYGFVANFSMELPSFGVSGINESADMSIGVTVIKNNMINNDLGPATAQMALQLFIKDYRYTYRCHRGDTQIQTRRSFELKKLWEQTRSKAGLLVSDGGSNLYNIRNLHIPEVCLKWELMDEDYQGRLCNPLNPFVSHKEIESVNNAVVMPAHGPAKSMEYDAVATTHSWTPKRNRSILNTSQRGILEDEQMYQKCCNLFEKFFPSSSYRRPVGISSMVEAMVSRARIDARIDFESGRIKKEEFAEIMKICSTIEELRRQK.

A disordered region spans residues 50 to 82; it reads SEKGKWTTNTETGAPQLNPIDGPLPEDNEPSGY. Polar residues predominate over residues 55–64; sequence WTTNTETGAP. Short sequence motifs (nuclear localization signal) lie at residues 187 to 195 and 203 to 216; these read RKRRVRDNM and RTIG…NKRS. The segment at 249–256 is promoter-binding site; the sequence is RGFVHFVE. The RdRp catalytic domain maps to 286–483; sequence VRKMMTNSQD…GINMSKKKSY (198 aa).

Belongs to the influenza viruses polymerase PB1 family. Influenza RNA polymerase is composed of three subunits: PB1, PB2 and PA. Interacts (via N-terminus) with PA (via C-terminus). Interacts (via C-terminus) with PB2 (via N-terminus); this interaction is essential for transcription initiation. Phosphorylated by host PRKCA.

Its subcellular location is the host nucleus. The protein resides in the host cytoplasm. It catalyses the reaction RNA(n) + a ribonucleoside 5'-triphosphate = RNA(n+1) + diphosphate. RNA-dependent RNA polymerase which is responsible for replication and transcription of virus RNA segments. The transcription of viral mRNAs occurs by a unique mechanism called cap-snatching. 5' methylated caps of cellular mRNAs are cleaved after 10-13 nucleotides by PA. In turn, these short capped RNAs are used as primers by PB1 for transcription of viral mRNAs. During virus replication, PB1 initiates RNA synthesis and copy vRNA into complementary RNA (cRNA) which in turn serves as a template for the production of more vRNAs. This chain is RNA-directed RNA polymerase catalytic subunit, found in Influenza A virus (strain A/Korea/426/1968 H2N2).